We begin with the raw amino-acid sequence, 435 residues long: Chromatin structure-remodeling complex subunit RSC7 (435 aa).

A disordered region spans residues 1–97; it reads MSDSEGGLAS…DKGVTRSRNR (97 aa). Positions 30-66 are enriched in acidic residues; the sequence is DTEDLDIDENDENEDDDYREEEANEGVNEEEISDEEE. Ser-86 is subject to Phosphoserine. A functional region; able to complement all NPL6 null allele phenotypes region spans residues 248 to 435; it reads ELRTKGNVIE…QNFEKCNEYI (188 aa).

This sequence belongs to the RSC7/SWP82 family. RSC7 subfamily. As to quaternary structure, interacts with ARP7, ARP9, RSC3, RSC8, RSC30 and STH1. Component of the two forms of the RSC complex composed of at least either RSC1 or RSC2, and ARP7, ARP9, LDB7, NPL6, RSC3, RSC30, RSC4, RSC58, RSC6, RSC8, RSC9, SFH1, STH1, HTL1 and probably RTT102. The complexes interact with histone and histone variant components of centromeric chromatin. Component of a fungal-specific module (HTL1-LDB7-NPL6-RSC3-RSC30) within the RSC complex.

The protein localises to the nucleus. Component of the chromatin structure remodeling complex (RSC), which is involved in transcription regulation and nucleosome positioning. RSC is responsible for the transfer of a histone octamer from a nucleosome core particle to naked DNA. The reaction requires ATP and involves an activated RSC-nucleosome intermediate. Remodeling reaction also involves DNA translocation, DNA twist and conformational change. As a reconfigurer of centromeric and flanking nucleosomes, RSC complex is required both for proper kinetochore function in chromosome segregation and, via a PKC1-dependent signaling pathway, for organization of the cellular cytoskeleton. Together with HTL1, LDB7, RSC3, RSC30 components, defines a fungal-specific module within the RSC complex that plays a role in many cellular functions including the maintenance of cell wall integrity. Acidic protein important for nuclear protein localization. The polypeptide is Chromatin structure-remodeling complex subunit RSC7 (NPL6) (Saccharomyces cerevisiae (strain ATCC 204508 / S288c) (Baker's yeast)).